The sequence spans 499 residues: MINKKISLGVLSILTAFSLQSVSYACTGFIIGKDLTKDGSLLYGRTEDLEPHHNKNFIVRLAKDNPAGEKWKDLSNGFEYPLPEHSYRYSAIPDVTPNKGVYDEAGFNECGVSMSATVSASANDAIQKIDPYVKNGLAESSMASVILPSVKTAREGVALIAKIVTEKGAAEGNIVTLADKDGIWYMEILSGHQYVAIKFPDDKYAVFPNTFYLGHVDFNDKENTIASEDVEKVAKKAKSYIEVDGKFHIAKSYNPPLNDANRSRSFSGIKSLDPDSKVTYKDSNYELLQSTDKTFSLEDAMKLQRNRFEGLDLKPLDQMALDGKGKPKSKKAVKGYAYPISNPNVMEAHIFQLKKDIPAELGGGVMWLSIGSPRNAPYLPYLGNISRTYEAYQEKSTQYNDKSWYWTVSHINDLVAAHPKPFGTKVIDEMKGLEKTWIAEQDKSTKEISDLVVSDPKAAQEKADKISLDRAEKTFKRLKAIEAKLVEEKPKNKKGLNRS.

Cysteine 26 is a catalytic residue.

Belongs to the peptidase C69 family.

It carries out the reaction an L-aminoacyl-L-amino acid + H2O = 2 an L-alpha-amino acid. The polypeptide is Probable dipeptidase B (pepDB) (Streptococcus pyogenes serotype M18 (strain MGAS8232)).